We begin with the raw amino-acid sequence, 852 residues long: Bifunctional uridylyltransferase/uridylyl-removing enzyme (852 aa).

Positions 1–318 are uridylyltransferase; the sequence is MPENLSSALE…STPMRVTLRI (318 aa). The tract at residues 319 to 672 is uridylyl-removing; it reads DDDYIQVNNQ…SRILPQSDSF (354 aa). Positions 436–558 constitute an HD domain; sequence VDDHILAVVR…VQTHERLSAL (123 aa). 2 consecutive ACT domains span residues 673 to 757 and 785 to 852; these read QVMV…SCNR and SVEI…EQLA.

It belongs to the GlnD family. Requires Mg(2+) as cofactor.

It carries out the reaction [protein-PII]-L-tyrosine + UTP = [protein-PII]-uridylyl-L-tyrosine + diphosphate. The enzyme catalyses [protein-PII]-uridylyl-L-tyrosine + H2O = [protein-PII]-L-tyrosine + UMP + H(+). With respect to regulation, uridylyltransferase (UTase) activity is inhibited by glutamine, while glutamine activates uridylyl-removing (UR) activity. Modifies, by uridylylation and deuridylylation, the PII regulatory proteins (GlnB and homologs), in response to the nitrogen status of the cell that GlnD senses through the glutamine level. Under low glutamine levels, catalyzes the conversion of the PII proteins and UTP to PII-UMP and PPi, while under higher glutamine levels, GlnD hydrolyzes PII-UMP to PII and UMP (deuridylylation). Thus, controls uridylylation state and activity of the PII proteins, and plays an important role in the regulation of nitrogen assimilation and metabolism. The polypeptide is Bifunctional uridylyltransferase/uridylyl-removing enzyme (Neisseria gonorrhoeae (strain NCCP11945)).